The primary structure comprises 484 residues: MIIIVIVVFLFYFSFLNLNLNPKKKRPPSPITLPVIGNLISLLNNQPQNILFNYYKKYGKIYQLQYGIVNTVVLSEFDILKEAFIENGEVFIERYNKITKKFKSSENIVNSNGLIWKKLQSISIQELSPNIKIKKYEPMIINETNKLIDSFNEHIKSNESIDPTLNIKICFLNIIISFLFNFRYNDYKDEKVIQLVDYIHSIFRMGSHPIPQDYIPILNKFYINKTTKIHQKIFENIYEYIENQVQKRLEILNKNNNNNNNNINECFVDLLLLKFKSNLLTWNEVIKTTTDLMIAGSDTNSLFTIHLIIALTNRENIQNKVFNEILNFYILNENNKITFSNKSKTPYYNSVLKEVERRFTVSPLSQPHRTNKDIILNGYFIPSGSQIIQNVYSCHLNDKDWENPFQFNPDRFLNNNQLEKKLITFGMGPRNCLGFQFALMSIWIVNLILFKSIKFSSNKLIEEEIREGGTTLSPFPFKINLIKR.

Residues 1–21 (MIIIVIVVFLFYFSFLNLNLN) form a helical membrane-spanning segment. Residue Cys-432 participates in heme binding.

The protein belongs to the cytochrome P450 family. It depends on heme as a cofactor.

Its subcellular location is the membrane. In Dictyostelium discoideum (Social amoeba), this protein is Probable cytochrome P450 555A1 (cyp555A1).